The following is a 491-amino-acid chain: Synaptotagmin-9 (491 aa).

Topologically, residues 1–52 are vesicular; sequence MPGARDALCHQALQLLAELCARGALEHDSCQDFIYHLRDRARPRLRDPDISV. Positions 9-31 are cysteine motif; it reads CHQALQLLAELCARGALEHDSCQ. Residues 53–73 form a helical membrane-spanning segment; that stretch reads SLLTLVVTACGLALFGVSLFV. Residues 74–491 are Cytoplasmic-facing; it reads SWKLCWVPWR…AHWHSLLEKR (418 aa). Residues 91-104 show a composition bias toward polar residues; the sequence is SKDNNQEPLNYTDT. Residues 91–147 form a disordered region; that stretch reads SKDNNQEPLNYTDTETNEQENSEDFLDPPTPCPDSSMKISHTSPDIPLSTQPGGQDN. Positions 105-116 are enriched in acidic residues; it reads ETNEQENSEDFL. Residues 127–144 show a composition bias toward polar residues; that stretch reads MKISHTSPDIPLSTQPGG. Ser177 is modified (phosphoserine). 2 consecutive C2 domains span residues 220–341 and 352–485; these read ACGK…ILWK and DLGE…AHWH. Ca(2+) contacts are provided by Asp251, Asp257, Asp309, Phe310, Asp311, Ser314, Asp317, Asp383, Asp389, Asp443, and Asp445.

It belongs to the synaptotagmin family. As to quaternary structure, homodimer; disulfide-linked via the cysteine motif. Can also form heterodimers with SYT3, SYT6, SYT7 and SYT10. Requires Ca(2+) as cofactor.

The protein localises to the cytoplasmic vesicle. It is found in the secretory vesicle. The protein resides in the synaptic vesicle membrane. Functionally, may be involved in Ca(2+)-dependent exocytosis of secretory vesicles through Ca(2+) and phospholipid binding to the C2 domain or may serve as Ca(2+) sensors in the process of vesicular trafficking and exocytosis. The protein is Synaptotagmin-9 (Syt9) of Rattus norvegicus (Rat).